The following is a 341-amino-acid chain: MLVLGIESSCDETGVALYDSAEGLVAHALHSQIAMHNAYGGVVPELASRDHIRRILPLTRQVFEESGRLLSELGGVAFTQGPGLAGALLVGAGMGRALAFALRVPAIGVHHLEGHLLSPLISDTPPAFPFVALLVSGGHTQLMLVSAVGQYTLLGETLDDAAGEAFDKTAQLLGLGYPGGPALSRLAAAGDATRFALPRPMLNSGDFDFSFSGLKTAVLTLVRKQGLGQAADIAAAFEAAAVDVLVGKSLAACRHAAANRLVVAGGVGANARLRERLTAEGGRAGVSVFYPSLEFCTDNGAMIAFAGAQRLASVADRVARASDLDFAVKPRWALASLGPVE.

His-111 and His-115 together coordinate Fe cation. Residues 134–138 (LVSGG), Asp-167, Gly-180, and Asn-270 each bind substrate. Asp-298 serves as a coordination point for Fe cation.

It belongs to the KAE1 / TsaD family. The cofactor is Fe(2+).

Its subcellular location is the cytoplasm. The enzyme catalyses L-threonylcarbamoyladenylate + adenosine(37) in tRNA = N(6)-L-threonylcarbamoyladenosine(37) in tRNA + AMP + H(+). Required for the formation of a threonylcarbamoyl group on adenosine at position 37 (t(6)A37) in tRNAs that read codons beginning with adenine. Is involved in the transfer of the threonylcarbamoyl moiety of threonylcarbamoyl-AMP (TC-AMP) to the N6 group of A37, together with TsaE and TsaB. TsaD likely plays a direct catalytic role in this reaction. The sequence is that of tRNA N6-adenosine threonylcarbamoyltransferase from Thiobacillus denitrificans (strain ATCC 25259 / T1).